Reading from the N-terminus, the 122-residue chain is Small ribosomal subunit protein bS16 (122 aa).

The segment at V87–A122 is disordered.

Belongs to the bacterial ribosomal protein bS16 family.

This Prochlorococcus marinus (strain MIT 9303) protein is Small ribosomal subunit protein bS16.